The following is a 215-amino-acid chain: ATP-dependent dethiobiotin synthetase BioD (215 aa).

13-18 is an ATP binding site; it reads DIGKTV. Threonine 17 contacts Mg(2+). Residue lysine 38 is part of the active site. Threonine 42 contacts substrate. ATP is bound by residues aspartate 50, 115 to 118, and 175 to 176; these read EGAG and NH. Mg(2+) is bound by residues aspartate 50 and glutamate 115.

It belongs to the dethiobiotin synthetase family. Homodimer. Requires Mg(2+) as cofactor.

The protein localises to the cytoplasm. The enzyme catalyses (7R,8S)-7,8-diammoniononanoate + CO2 + ATP = (4R,5S)-dethiobiotin + ADP + phosphate + 3 H(+). It participates in cofactor biosynthesis; biotin biosynthesis; biotin from 7,8-diaminononanoate: step 1/2. Its function is as follows. Catalyzes a mechanistically unusual reaction, the ATP-dependent insertion of CO2 between the N7 and N8 nitrogen atoms of 7,8-diaminopelargonic acid (DAPA, also called 7,8-diammoniononanoate) to form a ureido ring. This is ATP-dependent dethiobiotin synthetase BioD from Neisseria meningitidis serogroup C (strain 053442).